A 268-amino-acid chain; its full sequence is Glutamate racemase (268 aa).

Substrate-binding positions include 9-10 (DS) and 41-42 (YG). Residue Cys-73 is the Proton donor/acceptor of the active site. 74-75 (NS) contributes to the substrate binding site. The active-site Proton donor/acceptor is the Cys-183. Substrate is bound at residue 184 to 185 (TH).

It belongs to the aspartate/glutamate racemases family.

The enzyme catalyses L-glutamate = D-glutamate. It participates in cell wall biogenesis; peptidoglycan biosynthesis. Functionally, provides the (R)-glutamate required for cell wall biosynthesis. The sequence is that of Glutamate racemase from Shewanella pealeana (strain ATCC 700345 / ANG-SQ1).